We begin with the raw amino-acid sequence, 328 residues long: tRNA-modifying protein YgfZ (328 aa).

Positions 28 and 190 each coordinate folate.

Belongs to the tRNA-modifying YgfZ family.

The protein localises to the cytoplasm. Its function is as follows. Folate-binding protein involved in regulating the level of ATP-DnaA and in the modification of some tRNAs. It is probably a key factor in regulatory networks that act via tRNA modification, such as initiation of chromosomal replication. In Sodalis glossinidius (strain morsitans), this protein is tRNA-modifying protein YgfZ.